A 246-amino-acid polypeptide reads, in one-letter code: 5'-nucleotidase SurE (246 aa).

Residues aspartate 8, aspartate 9, serine 39, and asparagine 91 each coordinate a divalent metal cation.

Belongs to the SurE nucleotidase family. A divalent metal cation is required as a cofactor.

The protein localises to the cytoplasm. It carries out the reaction a ribonucleoside 5'-phosphate + H2O = a ribonucleoside + phosphate. Nucleotidase that shows phosphatase activity on nucleoside 5'-monophosphates. This is 5'-nucleotidase SurE from Histophilus somni (strain 129Pt) (Haemophilus somnus).